A 199-amino-acid polypeptide reads, in one-letter code: OPA3-like protein (199 aa).

Residues 98 to 141 (RSSEKDKKKEEALQNRFKNLEEKLEVQQETINNLTNVIEAIQSS) adopt a coiled-coil conformation.

The protein belongs to the OPA3 family.

In Dictyostelium discoideum (Social amoeba), this protein is OPA3-like protein.